Here is a 745-residue protein sequence, read N- to C-terminus: Elongation factor G, mitochondrial (745 aa).

In terms of domain architecture, tr-type G spans 40–317 (ERIRNIGISA…AVLDYLPNPG (278 aa)). GTP contacts are provided by residues 49-56 (AHIDSGKT), 116-120 (DTPGH), and 170-173 (NKLD).

Belongs to the TRAFAC class translation factor GTPase superfamily. Classic translation factor GTPase family. EF-G/EF-2 subfamily.

Its subcellular location is the mitochondrion. It functions in the pathway protein biosynthesis; polypeptide chain elongation. Its function is as follows. Mitochondrial GTPase that catalyzes the GTP-dependent ribosomal translocation step during translation elongation. During this step, the ribosome changes from the pre-translocational (PRE) to the post-translocational (POST) state as the newly formed A-site-bound peptidyl-tRNA and P-site-bound deacylated tRNA move to the P and E sites, respectively. Catalyzes the coordinated movement of the two tRNA molecules, the mRNA and conformational changes in the ribosome. Essential during development as it acts as a retrograde signal from mitochondria to the nucleus to slow down cell proliferation if mitochondrial energy output is low. This chain is Elongation factor G, mitochondrial, found in Drosophila yakuba (Fruit fly).